Consider the following 174-residue polypeptide: RNA pyrophosphohydrolase (174 aa).

The Nudix hydrolase domain maps to 6–149 (GYRPNVGIIL…KRDVYLGALK (144 aa)). The Nudix box motif lies at 38–59 (GGIKPGESPETAMYRELYEEVG).

It belongs to the Nudix hydrolase family. RppH subfamily. A divalent metal cation is required as a cofactor.

Functionally, accelerates the degradation of transcripts by removing pyrophosphate from the 5'-end of triphosphorylated RNA, leading to a more labile monophosphorylated state that can stimulate subsequent ribonuclease cleavage. The chain is RNA pyrophosphohydrolase from Neisseria meningitidis serogroup C (strain 053442).